Consider the following 313-residue polypeptide: MELPDVQSSLPEVRINLTRVGVKNVQKLVEVARPGKRPVIFISNFDVFVDLPGSLKGANLSRNFEVIDDVLQQAIDGDVNEIEELCSAVARKLLDRHEYAERTEVRMRSKFMVRRETPVSETSCHEVVNVHAKAIAQRNEGDPIIRKSIGAEVTGMTACPCAQNIMKDHALHVLENLGVAEDKIEAFFNEVPMATHNQRGRGFLCIEIDDDQHISLEKIIKILKDSMSARIYELLKRGDESYVVMEAHKNPRFVEDCVREMARKVIAQFHDLPGDSVVTIKQTNEESIHQHNAYAERKATIAELVSEMDKGTL.

The protein belongs to the GTP cyclohydrolase IV family. In terms of assembly, homodimer. Fe(2+) serves as cofactor.

The enzyme catalyses GTP + H2O = 7,8-dihydroneopterin 2',3'-cyclic phosphate + formate + diphosphate + H(+). The protein operates within cofactor biosynthesis; 5,6,7,8-tetrahydromethanopterin biosynthesis. Its function is as follows. Converts GTP to 7,8-dihydro-D-neopterin 2',3'-cyclic phosphate, the first intermediate in the biosynthesis of coenzyme methanopterin. The protein is GTP cyclohydrolase MptA of Methanoculleus marisnigri (strain ATCC 35101 / DSM 1498 / JR1).